A 357-amino-acid polypeptide reads, in one-letter code: MRQHRIVLLPGDGIGPEITAVAKLLLDALGHQHGFKLNFEQHPIGGVAIDASGSPLPASTLEACQASDAVLLAAIGSPRFDALPREQRPETGLLSLRAGLKLFANLRPVTILPALIDASSLKANVIKGVDLMVVRELTGGIYFGQPKGRIEADGDERAFNTMTYSRTEVDRIAKVAFELARDRSGKLCSVDKANVLDVSQLWRDRVDALAANYGDVELSHMYVDNAAMQLVRNPRQFDVLLTGNLFGDILSDEAAMLTGSIGMLPSASLGSEGPGLFEPVHGSAPDIAGQDLANPMAMVLCAAMMLRIGLKENDAARALEGSVERVLAAGFRTGDLMSEGCTQLGCAEMGEQLLQAL.

Substrate contacts are provided by Arg97, Arg107, Arg135, and Asp224. Mg(2+) contacts are provided by Asp224, Asp248, and Asp252. Residue 282–294 (GSAPDIAGQDLAN) coordinates NAD(+).

It belongs to the isocitrate and isopropylmalate dehydrogenases family. LeuB type 1 subfamily. Homodimer. The cofactor is Mg(2+). Mn(2+) serves as cofactor.

It is found in the cytoplasm. The catalysed reaction is (2R,3S)-3-isopropylmalate + NAD(+) = 4-methyl-2-oxopentanoate + CO2 + NADH. The protein operates within amino-acid biosynthesis; L-leucine biosynthesis; L-leucine from 3-methyl-2-oxobutanoate: step 3/4. Catalyzes the oxidation of 3-carboxy-2-hydroxy-4-methylpentanoate (3-isopropylmalate) to 3-carboxy-4-methyl-2-oxopentanoate. The product decarboxylates to 4-methyl-2 oxopentanoate. This chain is 3-isopropylmalate dehydrogenase, found in Prochlorococcus marinus (strain MIT 9313).